The following is a 484-amino-acid chain: Protein nucleotidyltransferase YdiU (484 aa).

Residues Gly-81, Gly-83, Arg-84, Lys-103, Asp-115, Gly-116, Arg-166, and Arg-173 each contribute to the ATP site. The active-site Proton acceptor is the Asp-244. Residues Asn-245 and Asp-254 each coordinate Mg(2+). Asp-254 lines the ATP pocket.

It belongs to the SELO family. Mg(2+) is required as a cofactor. The cofactor is Mn(2+).

It catalyses the reaction L-seryl-[protein] + ATP = 3-O-(5'-adenylyl)-L-seryl-[protein] + diphosphate. The catalysed reaction is L-threonyl-[protein] + ATP = 3-O-(5'-adenylyl)-L-threonyl-[protein] + diphosphate. The enzyme catalyses L-tyrosyl-[protein] + ATP = O-(5'-adenylyl)-L-tyrosyl-[protein] + diphosphate. It carries out the reaction L-histidyl-[protein] + UTP = N(tele)-(5'-uridylyl)-L-histidyl-[protein] + diphosphate. It catalyses the reaction L-seryl-[protein] + UTP = O-(5'-uridylyl)-L-seryl-[protein] + diphosphate. The catalysed reaction is L-tyrosyl-[protein] + UTP = O-(5'-uridylyl)-L-tyrosyl-[protein] + diphosphate. Functionally, nucleotidyltransferase involved in the post-translational modification of proteins. It can catalyze the addition of adenosine monophosphate (AMP) or uridine monophosphate (UMP) to a protein, resulting in modifications known as AMPylation and UMPylation. In Shewanella sp. (strain MR-4), this protein is Protein nucleotidyltransferase YdiU.